Consider the following 569-residue polypeptide: Archaeosine synthase (569 aa).

The region spanning 495–569 is the PUA domain; sequence SGGKDINYIE…ALVNIRNVKS (75 aa).

Belongs to the archaeosine synthase type 1 family. In terms of assembly, homodimer.

The catalysed reaction is 7-cyano-7-carbaguanosine(15) in tRNA + L-glutamine + H2O = archaeosine(15) in tRNA + L-glutamate. It functions in the pathway tRNA modification; archaeosine-tRNA biosynthesis. In terms of biological role, is responsible for the final step in the biosynthesis of archaeosine, a modified nucleoside present in the dihydrouridine loop (D-loop) of archaeal tRNA. Catalyzes the conversion of 7-cyano-7-deazaguanine (preQ0)-modified tRNA to archaeosine-tRNA, transforming a nitrile group to a formamidine group. Can use either glutamine, asparagine or ammonium as amino donor. The polypeptide is Archaeosine synthase (Methanocaldococcus jannaschii (strain ATCC 43067 / DSM 2661 / JAL-1 / JCM 10045 / NBRC 100440) (Methanococcus jannaschii)).